The sequence spans 657 residues: MTDRIVPATLVFREDGTVVSPLYGDIYHSAAGALAQADHVFIRGNGLPERWRHERAFTIIETGFGTGCNFLATWAAWRADPSHCERLHFVSVEKHPFAREDLRRAAAHIVAYTTITPIAPLVDELANAWPALTPGVHRLEFDDGRVTLTLVFGDALDVLPNLALRAHAFYLDGFAPSKNADLWSPAIFKSLAKLADERATFATYTSSGAVKRALDEAGFAYRKVDGFAGKRAMLVGEFAPRWRVRRHEPPRAFSTDRRDAIVIGAGLAGCAVVERLAARGWHVTLIERRERIASEASGNPAGVFHPMIARDDNLAARLSRAGFLHALHRWRALERAGHAFSRSTHGLVQLATSDDEFERMRESIDALGVPAELASALSRDDARALLRTDVAHGGWLFAQGGSISPATLAAAQCAAAGDRLSRIVGVEIARLERGGDGRWRALDASGATIAQASVVVVANAADAARIAGLRHAPTQRVRGQLTLLPPGSAPAVPLPVIGDGYVVPLANGVTLTGATYEPDDTDATPREAGHRENLERLERLLPAFSANALDAGALAGRVGFRCVASDRLPLVGELGDEAAAAREAAALTGARLRDVPRATGLYGAFGYGSRGLVWAALGAELIAAQIDGEPWPLERELAEAIDPARFLVRALRHGRVA.

Residues 1 to 239 form a tRNA (mnm(5)s(2)U34)-methyltransferase region; it reads MTDRIVPATL…KRAMLVGEFA (239 aa). The interval 263 to 657 is FAD-dependent cmnm(5)s(2)U34 oxidoreductase; it reads IGAGLAGCAV…VRALRHGRVA (395 aa).

It in the N-terminal section; belongs to the methyltransferase superfamily. tRNA (mnm(5)s(2)U34)-methyltransferase family. The protein in the C-terminal section; belongs to the DAO family. Requires FAD as cofactor.

The protein resides in the cytoplasm. It catalyses the reaction 5-aminomethyl-2-thiouridine(34) in tRNA + S-adenosyl-L-methionine = 5-methylaminomethyl-2-thiouridine(34) in tRNA + S-adenosyl-L-homocysteine + H(+). Functionally, catalyzes the last two steps in the biosynthesis of 5-methylaminomethyl-2-thiouridine (mnm(5)s(2)U) at the wobble position (U34) in tRNA. Catalyzes the FAD-dependent demodification of cmnm(5)s(2)U34 to nm(5)s(2)U34, followed by the transfer of a methyl group from S-adenosyl-L-methionine to nm(5)s(2)U34, to form mnm(5)s(2)U34. The polypeptide is tRNA 5-methylaminomethyl-2-thiouridine biosynthesis bifunctional protein MnmC (Burkholderia mallei (strain SAVP1)).